The chain runs to 108 residues: Pyrimidine/purine nucleoside phosphorylase (108 aa).

The protein belongs to the nucleoside phosphorylase PpnP family.

It catalyses the reaction a purine D-ribonucleoside + phosphate = a purine nucleobase + alpha-D-ribose 1-phosphate. The enzyme catalyses adenosine + phosphate = alpha-D-ribose 1-phosphate + adenine. The catalysed reaction is cytidine + phosphate = cytosine + alpha-D-ribose 1-phosphate. It carries out the reaction guanosine + phosphate = alpha-D-ribose 1-phosphate + guanine. It catalyses the reaction inosine + phosphate = alpha-D-ribose 1-phosphate + hypoxanthine. The enzyme catalyses thymidine + phosphate = 2-deoxy-alpha-D-ribose 1-phosphate + thymine. The catalysed reaction is uridine + phosphate = alpha-D-ribose 1-phosphate + uracil. It carries out the reaction xanthosine + phosphate = alpha-D-ribose 1-phosphate + xanthine. In terms of biological role, catalyzes the phosphorolysis of diverse nucleosides, yielding D-ribose 1-phosphate and the respective free bases. Can use uridine, adenosine, guanosine, cytidine, thymidine, inosine and xanthosine as substrates. Also catalyzes the reverse reactions. This is Pyrimidine/purine nucleoside phosphorylase from Polaromonas sp. (strain JS666 / ATCC BAA-500).